Reading from the N-terminus, the 370-residue chain is UDP-N-acetylglucosamine--N-acetylmuramyl-(pentapeptide) pyrophosphoryl-undecaprenol N-acetylglucosamine transferase (370 aa).

UDP-N-acetyl-alpha-D-glucosamine contacts are provided by residues 10–12, Asn-126, Ser-200, Ile-255, and Gln-300; that span reads TGG.

The protein belongs to the glycosyltransferase 28 family. MurG subfamily.

It localises to the cell membrane. The enzyme catalyses Mur2Ac(oyl-L-Ala-gamma-D-Glu-L-Lys-D-Ala-D-Ala)-di-trans,octa-cis-undecaprenyl diphosphate + UDP-N-acetyl-alpha-D-glucosamine = beta-D-GlcNAc-(1-&gt;4)-Mur2Ac(oyl-L-Ala-gamma-D-Glu-L-Lys-D-Ala-D-Ala)-di-trans,octa-cis-undecaprenyl diphosphate + UDP + H(+). It functions in the pathway cell wall biogenesis; peptidoglycan biosynthesis. Its function is as follows. Cell wall formation. Catalyzes the transfer of a GlcNAc subunit on undecaprenyl-pyrophosphoryl-MurNAc-pentapeptide (lipid intermediate I) to form undecaprenyl-pyrophosphoryl-MurNAc-(pentapeptide)GlcNAc (lipid intermediate II). The chain is UDP-N-acetylglucosamine--N-acetylmuramyl-(pentapeptide) pyrophosphoryl-undecaprenol N-acetylglucosamine transferase from Lactobacillus johnsonii (strain CNCM I-12250 / La1 / NCC 533).